Consider the following 370-residue polypeptide: Probable trehalose-phosphate phosphatase 6 (370 aa).

Belongs to the trehalose phosphatase family. It depends on a divalent metal cation as a cofactor.

It carries out the reaction alpha,alpha-trehalose 6-phosphate + H2O = alpha,alpha-trehalose + phosphate. The protein operates within glycan biosynthesis; trehalose biosynthesis. Its function is as follows. Removes the phosphate from trehalose 6-phosphate to produce free trehalose. Trehalose accumulation in plant may improve abiotic stress tolerance. In Oryza sativa subsp. japonica (Rice), this protein is Probable trehalose-phosphate phosphatase 6 (TPP6).